The primary structure comprises 341 residues: MTTQQPVAVLGGGSFGTAIANLLAENGHQVRQWMRDPEQAEAIRVNRENPRYLKGIKVRPEVEPVTDLTAALEVSELIFVALPSSALRSVLSPHIERLSGKMLVSLTKGIEAQSFKLMSQILEEIVPQARIGVLSGPNLAREIAEHALTATVVASEDEDLCQQVQAALHGRTFRVYASNDRFGVELGGALKNVYAIIAGMAVALDMGENTKSMLITRALAEMTRFAVSQGANPMTFLGLAGVGDLIVTCSSPKSRNYQVGFALGQGLSLEEAVTRLGEVAEGVNTLKVLKVKAQEVQVYMPLVAGLHAILFEGRTLSQVIEALMRAEPKTDVDFISITGFN.

NADPH contacts are provided by Ser-14, Phe-15, Arg-35, and Lys-108. Sn-glycerol 3-phosphate-binding residues include Lys-108 and Gly-136. Ala-140 contributes to the NADPH binding site. Sn-glycerol 3-phosphate is bound by residues Lys-191, Asp-244, Ser-254, Arg-255, and Asn-256. Residue Lys-191 is the Proton acceptor of the active site. Residue Arg-255 coordinates NADPH. 2 residues coordinate NADPH: Val-279 and Glu-281.

Belongs to the NAD-dependent glycerol-3-phosphate dehydrogenase family.

It is found in the cytoplasm. The enzyme catalyses sn-glycerol 3-phosphate + NAD(+) = dihydroxyacetone phosphate + NADH + H(+). It carries out the reaction sn-glycerol 3-phosphate + NADP(+) = dihydroxyacetone phosphate + NADPH + H(+). Its pathway is membrane lipid metabolism; glycerophospholipid metabolism. Functionally, catalyzes the reduction of the glycolytic intermediate dihydroxyacetone phosphate (DHAP) to sn-glycerol 3-phosphate (G3P), the key precursor for phospholipid synthesis. This Pseudomonas syringae pv. tomato (strain ATCC BAA-871 / DC3000) protein is Glycerol-3-phosphate dehydrogenase [NAD(P)+].